A 30-amino-acid chain; its full sequence is Photosystem I reaction center subunit XII (30 aa).

A helical transmembrane segment spans residues 7–26; the sequence is IFVALLFALVSAVLAIRLGK.

Belongs to the PsaM family.

Its subcellular location is the plastid. It localises to the chloroplast thylakoid membrane. This is Photosystem I reaction center subunit XII from Porphyra purpurea (Red seaweed).